We begin with the raw amino-acid sequence, 269 residues long: 4-hydroxy-tetrahydrodipicolinate reductase (269 aa).

Residues Gly-11 to Met-16 and Glu-37 contribute to the NAD(+) site. Residue Arg-38 participates in NADP(+) binding. NAD(+) contacts are provided by residues Gly-101–Thr-103 and Ala-125–Met-128. His-158 (proton donor/acceptor) is an active-site residue. (S)-2,3,4,5-tetrahydrodipicolinate is bound at residue His-159. The active-site Proton donor is the Lys-162. Gly-168–Thr-169 provides a ligand contact to (S)-2,3,4,5-tetrahydrodipicolinate.

It belongs to the DapB family.

It localises to the cytoplasm. It carries out the reaction (S)-2,3,4,5-tetrahydrodipicolinate + NAD(+) + H2O = (2S,4S)-4-hydroxy-2,3,4,5-tetrahydrodipicolinate + NADH + H(+). The catalysed reaction is (S)-2,3,4,5-tetrahydrodipicolinate + NADP(+) + H2O = (2S,4S)-4-hydroxy-2,3,4,5-tetrahydrodipicolinate + NADPH + H(+). Its pathway is amino-acid biosynthesis; L-lysine biosynthesis via DAP pathway; (S)-tetrahydrodipicolinate from L-aspartate: step 4/4. In terms of biological role, catalyzes the conversion of 4-hydroxy-tetrahydrodipicolinate (HTPA) to tetrahydrodipicolinate. This Cereibacter sphaeroides (strain ATCC 17023 / DSM 158 / JCM 6121 / CCUG 31486 / LMG 2827 / NBRC 12203 / NCIMB 8253 / ATH 2.4.1.) (Rhodobacter sphaeroides) protein is 4-hydroxy-tetrahydrodipicolinate reductase.